We begin with the raw amino-acid sequence, 309 residues long: MAAAGAPDGMEEPGMDTEAETVATEAPARPVNCLEAEAAAGAAAEDSGAARGSLQPAPAQPPGDPAAQASVSNGEDAGGGAGRELVDLKIIWNKTKHDVKFPLDSTGSELKQKIHSITGLPPAMQKVMYKGLVPEDKTLREIKVTSGAKIMVVGSTINDVLAVNTPKDAAQQDAKAEENKKEPLCRQKQHRKVLDKGKPEDVMPSVKGAQERLPTVPLSGMYNKSGGKVRLTFKLEQDQLWIGTKERTEKLPMGSIKNVVSEPIEGHEDYHMMAFQLGPTEASYYWVYWVPTQYVDAIKDTVLGKWQYF.

The segment at 1 to 80 is disordered; the sequence is MAAAGAPDGM…VSNGEDAGGG (80 aa). Acidic residues predominate over residues 9–19; sequence GMEEPGMDTEA. Residues 35 to 57 show a composition bias toward low complexity; it reads EAEAAAGAAAEDSGAARGSLQPA. The 76-residue stretch at 84-159 folds into the Ubiquitin-like domain; the sequence is ELVDLKIIWN…IMVVGSTIND (76 aa). Residues 171–204 form a disordered region; it reads QQDAKAEENKKEPLCRQKQHRKVLDKGKPEDVMP. 2 stretches are compositionally biased toward basic and acidic residues: residues 174-185 and 192-201; these read AKAEENKKEPLC and KVLDKGKPED.

Binds polyubiquitin.

In terms of biological role, may play a role as NF-kappa-B regulator. This Homo sapiens (Human) protein is Ubiquitin domain-containing protein UBFD1 (UBFD1).